Here is a 431-residue protein sequence, read N- to C-terminus: MRQRVGRSIARAKFINTALLGRKRPVMERVVDIAHVDSSKAIQPLMKELETDTTEARYKVLQSVLEIYDDEKNIEPALTKEFHKMYLDVAFEISLPPQMTALDASQPWMLYWIANSLKVMDRDWLSDDTKRKIVDKLFTISPSGGPFGGGPGQLSHLASTYAAINALSLCDNIDGCWDRIDRKGIYQWLISLKEPNGGFKTCLEVGEVDTRGIYCALSIATLLNILTEELTEGVLNYLKNCQNYEGGFGSCPHVDEAHGGYTFCATASLAILRSMDQINVEKLLEWSSARQLQEERGFCGRSNKLVDGCYSFWVGGSAAILEAFGYGQCFNKHALRDYILYCCQEKEQPGLRDKPGAHSDFYHTNYCLLGLAVAESSYSCTPNDSPHNIKCTPDRLIGSSKLTDVNPVYGLPIENVRKIIHYFKSNLSSPS.

PFTB repeat units follow at residues 130-171, 182-224, 231-273, 280-322, and 332-375; these read KRKI…SLCD, RKGI…TLLN, TEGV…AILR, VEKL…AILE, and KHAL…AVAE. (2E,6E)-farnesyl diphosphate-binding positions include 258-261 and 301-304; these read HGGY and RSNK. Residues Asp307 and Cys309 each coordinate Zn(2+). 310–313 contacts (2E,6E)-farnesyl diphosphate; the sequence is YSFW. Residue His363 participates in Zn(2+) binding.

The protein belongs to the protein prenyltransferase subunit beta family. As to quaternary structure, heterodimer of an alpha (RAM2) and a beta (RAM1) subunit. The cofactor is Zn(2+).

Its subcellular location is the cytoplasm. It carries out the reaction L-cysteinyl-[protein] + (2E,6E)-farnesyl diphosphate = S-(2E,6E)-farnesyl-L-cysteinyl-[protein] + diphosphate. In terms of biological role, catalyzes the transfer of a farnesyl moiety from farnesyl diphosphate to a cysteine at the fourth position from the C-terminus of several proteins having the C-terminal sequence Cys-aliphatic-aliphatic-X where X is Ser, Ala, Met, Cys, or Gln. Required for the membrane localization of proteins such as a-factor, Ras proteins and other membrane proteins containing the C-terminal CAAX motif. The beta subunit is responsible for isoprenoid and peptide-binding. This is Protein farnesyltransferase subunit beta from Saccharomyces cerevisiae (strain ATCC 204508 / S288c) (Baker's yeast).